The chain runs to 767 residues: Photosystem I P700 chlorophyll a apoprotein A1 (767 aa).

A disordered region spans residues 1–22 (MTISPPESGEKNKKVLEDPVKA). Positions 8 to 22 (SGEKNKKVLEDPVKA) are enriched in basic and acidic residues. 8 consecutive transmembrane segments (helical) span residues 76-99 (IFSA…FHGA), 162-185 (LMAL…YHYH), 201-225 (LNHH…HIGA), 309-327 (IAHH…GHLY), 368-391 (RHAQ…HHMY), 407-433 (LGLF…IAMV), 455-477 (ALIS…LYIH), and 558-576 (LMIH…LILL). Cysteine 600 and cysteine 609 together coordinate [4Fe-4S] cluster. The next 2 helical transmembrane spans lie at 616 to 637 (HVFL…HFSW) and 681 to 703 (ISMY…MFLF). Divinylchlorophyll a' is bound at residue histidine 692. Residues methionine 700 and tyrosine 708 each coordinate divinyl chlorophyll a. Phylloquinone is bound at residue tryptophan 709. Residues 741–761 (AVGVAHFLLGGIATTWAFFHA) traverse the membrane as a helical segment.

Belongs to the PsaA/PsaB family. As to quaternary structure, the PsaA/B heterodimer binds the P700 divinyl chlorophyll special pair and subsequent electron acceptors. PSI consists of a core antenna complex that captures photons, and an electron transfer chain that converts photonic excitation into a charge separation. The cyanobacterial PSI reaction center is composed of one copy each of PsaA,B,C,D,E,F,I,J,K,L,M and X, and forms trimeric complexes. It depends on PSI electron transfer chain: 5 divinyl chlorophyll a, 1 divinyl chlorophyll a', 2 phylloquinones and 3 4Fe-4S clusters. PSI core antenna: 90 divinyl chlorophyll a, 22 carotenoids, 3 phospholipids and 1 galactolipid. P700 is a divinyl chlorophyll a/divinyl chlorophyll a' dimer, A0 is one or more divinyl chlorophyll a, A1 is one or both phylloquinones and FX is a shared 4Fe-4S iron-sulfur center. as a cofactor.

The protein resides in the cellular thylakoid membrane. The catalysed reaction is reduced [plastocyanin] + hnu + oxidized [2Fe-2S]-[ferredoxin] = oxidized [plastocyanin] + reduced [2Fe-2S]-[ferredoxin]. In terms of biological role, psaA and PsaB bind P700, the primary electron donor of photosystem I (PSI), as well as the electron acceptors A0, A1 and FX. PSI is a plastocyanin/cytochrome c6-ferredoxin oxidoreductase, converting photonic excitation into a charge separation, which transfers an electron from the donor P700 chlorophyll pair to the spectroscopically characterized acceptors A0, A1, FX, FA and FB in turn. Oxidized P700 is reduced on the lumenal side of the thylakoid membrane by plastocyanin or cytochrome c6. This is Photosystem I P700 chlorophyll a apoprotein A1 from Prochlorococcus marinus (strain MIT 9312).